We begin with the raw amino-acid sequence, 211 residues long: Troponin I, cardiac muscle (211 aa).

Position 1 is an N-acetylalanine (Ala-1). A disordered region spans residues 1-43; it reads ADESRDAAGEARPAPAPVRRRSSANYRAYATEPHAKSKKKISA. Phosphoserine is present on Ser-4. Residue Ser-22 is modified to Phosphoserine; by PHK, PKA and PKD/PRKD1. Position 23 is a phosphoserine; by PKA and PKD/PRKD1 (Ser-23). Tyr-26 bears the Phosphotyrosine mark. Thr-31 is modified (phosphothreonine; by STK4/MST1). The segment at 32–79 is involved in binding TNC; that stretch reads EPHAKSKKKISASRKLQLKTLMLQIAKQELEREAEERRGEKGRALSTR. Phosphoserine; by PKC/PRKCE occurs at positions 42 and 44. At Thr-51 the chain carries Phosphothreonine; by STK4/MST1. Residue Ser-77 is modified to Phosphoserine. Thr-78 bears the Phosphothreonine mark. Thr-129 and Thr-143 each carry phosphothreonine; by STK4/MST1. Residues 129–150 are involved in binding TNC and actin; the sequence is TQKIFDLRGKFKRPTLRLRVRI. A Phosphoserine; by PAK3 modification is found at Ser-151. Thr-182 bears the Phosphothreonine mark. Residue Ser-200 is modified to Phosphoserine.

It belongs to the troponin I family. As to quaternary structure, interacts with TRIM63. Binds to actin and tropomyosin. Interacts with STK4/MST1. Phosphorylated at Ser-22 and Ser-23 by PRKD1; phosphorylation reduces myofilament calcium sensitivity. Phosphorylated preferentially at Thr-31. Phosphorylation by STK4/MST1 alters its binding affinity to TNNC1 (cardiac Tn-C) and TNNT2 (cardiac Tn-T). Phosphorylated at Ser-42 and Ser-44 by PRKCE; phosphorylation increases myocardium contractile dysfunction. Ser-22 is one of three sites in the region of residues 1-48 that are phosphorylated by phosphorylase kinase.

Troponin I is the inhibitory subunit of troponin, the thin filament regulatory complex which confers calcium-sensitivity to striated muscle actomyosin ATPase activity. The protein is Troponin I, cardiac muscle (TNNI3) of Oryctolagus cuniculus (Rabbit).